Here is a 462-residue protein sequence, read N- to C-terminus: Glycine--tRNA ligase (462 aa).

Residues arginine 100 and glutamate 174 each contribute to the substrate site. ATP-binding positions include 206-208 (RNE), 216-221 (FRTREF), 290-291 (EL), and 334-337 (GVDR). 221–225 (FEQME) provides a ligand contact to substrate. 330–334 (EPSVG) is a binding site for substrate.

Belongs to the class-II aminoacyl-tRNA synthetase family. In terms of assembly, homodimer.

Its subcellular location is the cytoplasm. The enzyme catalyses tRNA(Gly) + glycine + ATP = glycyl-tRNA(Gly) + AMP + diphosphate. Its function is as follows. Catalyzes the attachment of glycine to tRNA(Gly). The chain is Glycine--tRNA ligase from Alkaliphilus oremlandii (strain OhILAs) (Clostridium oremlandii (strain OhILAs)).